A 305-amino-acid polypeptide reads, in one-letter code: MSSRYTPSEMAQALGAGLLSFPVTHFDADMAFDEPAYRSNLDWLSSHPAAGLFAAGGTGELFSLTLDEVDRAVRAAVTQTAGRMPVIAPAGYGTAIAVAMAQAAERNDADGILLFPPYLTECDADGVAEHVERVCKATSLGVIVYGRANARLDDVALARVAERCPNLVGYKDGIGDVERMTRIYARLGDRLLYVGGLPTAETFALPYLEMGVTTYSSAIFNFLPEWALSFYAAVRARDHATIYRELNDFVLPYTVLRNRRAGYAVSIVKAGMRAVGRPAGPVRTPLADLTEDEFAQLTQLIGGRR.

This sequence belongs to the DapA family.

The enzyme catalyses 5-dehydro-4-deoxy-D-glucarate + H(+) = 2,5-dioxopentanoate + CO2 + H2O. It participates in carbohydrate acid metabolism; D-glucarate degradation; 2,5-dioxopentanoate from D-glucarate: step 2/2. The protein is Probable 5-dehydro-4-deoxyglucarate dehydratase of Xanthomonas campestris pv. campestris (strain B100).